The primary structure comprises 432 residues: Glycerophosphocholine acyltransferase 1 (432 aa).

Residues 1–110 are Cytoplasmic-facing; sequence MYKLDNNDID…DSIFFKNSSR (110 aa). Serine 78 carries the post-translational modification Phosphoserine. The chain crosses the membrane as a helical span at residues 111–131; sequence LEKAFYPFTLFNIFFIGFLMG. A topological domain (lumenal) is located at residue arginine 132. A helical membrane pass occupies residues 133-153; sequence FPEWFHVYYTILFFVLMPIRF. At 154 to 162 the chain is on the cytoplasmic side; the sequence is YTYYKTKNH. Residues 163-183 traverse the membrane as a helical segment; it reads YFLADFCYFVNMLCLLFIWIF. Residues 184 to 187 are Lumenal-facing; it reads PYSY. Residues 188–208 form a helical membrane-spanning segment; it reads SLFQSCFAFTFGTLCFAVITW. Over 209 to 221 the chain is Cytoplasmic; it reads RNSLVIHSIDKTT. A helical transmembrane segment spans residues 222–242; the sequence is SCFIHIIPPCVMYVIYHGLPL. At 243–263 the chain is on the lumenal side; sequence EYKIERFPGAIIQSELDIKKN. Residues 264–284 traverse the membrane as a helical segment; that stretch reads ILWTSLYYLVWQSLYHYFITL. At 285-318 the chain is on the cytoplasmic side; it reads KKSSKIKSGERMTSFEYLTTHQFKNFWAVKLRSP. A helical transmembrane segment spans residues 319-339; sequence WPMIIYTLSQYFYQLFTMLLC. At 340–346 the chain is on the lumenal side; that stretch reads GIWIRYK. The chain crosses the membrane as a helical span at residues 347-369; it reads LAAALFLTIVFLWASHNGATYYI. Topologically, residues 370–432 are cytoplasmic; the sequence is DHYGKNFEKE…DSSSVSSKSD (63 aa). The disordered stretch occupies residues 413–432; sequence LNVNRDEDFDDSSSVSSKSD.

Belongs to the GPC1 family.

The protein localises to the membrane. It carries out the reaction sn-glycerol 3-phosphocholine + an acyl-CoA = a 1-acyl-sn-glycero-3-phosphocholine + CoA. The catalysed reaction is sn-glycero-3-phosphoethanolamine + an acyl-CoA = a monoacyl-sn-glycero-3-phosphoethanolamine + CoA. The enzyme catalyses sn-glycero-3-phosphoethanolamine + (9Z)-octadecenoyl-CoA = (9Z-octadecenoyl)-sn-glycero-3-phosphoethanolamine + CoA. It catalyses the reaction sn-glycerol 3-phosphocholine + hexadecanoyl-CoA = hexadecanoyl-sn-glycero-3-phosphocholine + CoA. It carries out the reaction (9Z,12Z)-octadecadienoyl-CoA + sn-glycerol 3-phosphocholine = (9Z,12Z-octadecadienoyl)-sn-glycero-3-phosphocholine + CoA. The catalysed reaction is (12R)-hydroxy-(9Z)-octadecenoyl-CoA + sn-glycerol 3-phosphocholine = (12R-hydroxy-9Z-octadecenoyl)-sn-glycero-3-phosphocholine + CoA. The enzyme catalyses (9Z,12Z,15Z)-octadecatrienoyl-CoA + sn-glycerol 3-phosphocholine = (9Z,12Z,15Z-octadecatrienoyl)-sn-glycero-3-phosphocholine + CoA. It catalyses the reaction sn-glycerol 3-phosphocholine + (9Z)-octadecenoyl-CoA = (9Z-octadecenoyl)-sn-glycero-3-phosphocholine + CoA. It carries out the reaction 1-(9Z-octadecenoyl)-sn-glycero-3-phosphoethanolamine + sn-glycerol 3-phosphocholine = (9Z-octadecenoyl)-sn-glycero-3-phosphocholine + sn-glycero-3-phosphoethanolamine. Its activity is regulated as follows. The GPCAT activity is sensitive to N-ethylmaleimide, phenanthroline, and divalent cations including Ca(2+), Mg(2+), Mn(2+) and Zn(2+). The activity is also inhibited by glycerol-3-phosphate (G3P). Glycerophosphocholine acyltransferase (GPCAT) that utilizes acyl-CoA to acylate glycero-3-phosphocholine (GPC), forming lysophosphatidylcholine (LPC). Shows broad acyl specificities with a preference for 16:0-CoA, polyunsaturated acyl-CoA, and the hydroxylated ricinoleoyl-CoA. Also catalyzes the acylation of glycero-3-phosphoethanolamine (GPE) with acyl-CoA. In addition to acyl-CoA, GPCAT efficiently utilizes LPC and lysophosphatidylethanolamine (LPE) as acyl donors in the acylation of GPC. Contributes to the maintenance of phosphatidylcholine (PC) homeostasis and might also have specific functions in acyl editing of PC, such as transferring acyl groups modified at the sn-2 position of PC to the sn-1. Involved in postsynthetic PC remodeling that produces more saturated PC species. This Saccharomyces cerevisiae (strain ATCC 204508 / S288c) (Baker's yeast) protein is Glycerophosphocholine acyltransferase 1.